A 105-amino-acid chain; its full sequence is NADH-quinone oxidoreductase subunit K (105 aa).

The next 3 helical transmembrane spans lie at 4 to 24, 28 to 48, and 66 to 86; these read LTHY…GVIV, IIVI…SLVA, and LSIF…ALIV.

Belongs to the complex I subunit 4L family. In terms of assembly, NDH-1 is composed of 14 different subunits. Subunits NuoA, H, J, K, L, M, N constitute the membrane sector of the complex.

The protein localises to the cell inner membrane. The catalysed reaction is a quinone + NADH + 5 H(+)(in) = a quinol + NAD(+) + 4 H(+)(out). Functionally, NDH-1 shuttles electrons from NADH, via FMN and iron-sulfur (Fe-S) centers, to quinones in the respiratory chain. The immediate electron acceptor for the enzyme in this species is believed to be ubiquinone. Couples the redox reaction to proton translocation (for every two electrons transferred, four hydrogen ions are translocated across the cytoplasmic membrane), and thus conserves the redox energy in a proton gradient. The chain is NADH-quinone oxidoreductase subunit K from Akkermansia muciniphila (strain ATCC BAA-835 / DSM 22959 / JCM 33894 / BCRC 81048 / CCUG 64013 / CIP 107961 / Muc).